We begin with the raw amino-acid sequence, 216 residues long: ATP phosphoribosyltransferase (216 aa).

The protein belongs to the ATP phosphoribosyltransferase family. Short subfamily. In terms of assembly, heteromultimer composed of HisG and HisZ subunits.

The protein localises to the cytoplasm. The catalysed reaction is 1-(5-phospho-beta-D-ribosyl)-ATP + diphosphate = 5-phospho-alpha-D-ribose 1-diphosphate + ATP. It functions in the pathway amino-acid biosynthesis; L-histidine biosynthesis; L-histidine from 5-phospho-alpha-D-ribose 1-diphosphate: step 1/9. Functionally, catalyzes the condensation of ATP and 5-phosphoribose 1-diphosphate to form N'-(5'-phosphoribosyl)-ATP (PR-ATP). Has a crucial role in the pathway because the rate of histidine biosynthesis seems to be controlled primarily by regulation of HisG enzymatic activity. The chain is ATP phosphoribosyltransferase from Streptococcus thermophilus (strain ATCC BAA-491 / LMD-9).